The primary structure comprises 336 residues: Flavonoid 4'-O-methyltransferase 5 (336 aa).

The S-adenosyl-L-methionine site is built by Tyr140 and Asp203. The Proton acceptor role is filled by His241.

This sequence belongs to the class I-like SAM-binding methyltransferase superfamily. Cation-independent O-methyltransferase family. As to quaternary structure, homodimer. In terms of tissue distribution, expressed in leaves.

The catalysed reaction is genkwanin + S-adenosyl-L-methionine = apigenin 4',7-dimethyl ether + S-adenosyl-L-homocysteine. It carries out the reaction cirsiliol + S-adenosyl-L-methionine = eupatorin + S-adenosyl-L-homocysteine + H(+). It catalyses the reaction cirsimaritin + S-adenosyl-L-methionine = salvigenin + S-adenosyl-L-homocysteine + H(+). The enzyme catalyses scutellarein 7-methyl ether + S-adenosyl-L-methionine = ladanein + S-adenosyl-L-homocysteine + H(+). The catalysed reaction is (2S)-sakuranetin + S-adenosyl-L-methionine = (2S)-naringenin 4',7-dimethyl ether + S-adenosyl-L-homocysteine + H(+). It participates in flavonoid metabolism. With respect to regulation, substrate inhibition by genkwanin (GENK) at concentrations above 10 mM. Its function is as follows. Flavonoid 4'-O-methyltransferase involved in the biosynthesis of polymethoxylated flavonoids natural products such as nevadensin and salvigenin, aroma compounds which contribute to the flavor of sweet basil, and exhibit pharmacological activities such as anti-allergic, anti-oxidant, antibacterial, anti-proliferative, and anti-inflammatory effects. Catalyzes S-adenosylmethionine-dependent regioselective 4'-O-methylation of flavonoids; active on various hydroxylated flavonoid substrates, including scutellarein-7-methyl ether (SCU7Me) and, with a lower efficiency, cirsimaritin (CIRM), sakuranetin (NAR7Me), ladanein (LAD) and genkwanin (GENK). This Ocimum basilicum (Sweet basil) protein is Flavonoid 4'-O-methyltransferase 5.